Here is a 1705-residue protein sequence, read N- to C-terminus: Intersectin-1 (1705 aa).

EH domains follow at residues Glu21 to Met109 and Ser220 to Arg309. 2 EF-hand domains span residues Leu53–Lys88 and Leu253–Ala288. 10 residues coordinate Ca(2+): Asp66, Asn68, Asp70, Arg72, Glu77, Asp266, Asp268, Asp270, Lys272, and Glu277. Disordered stretches follow at residues Val322–Asn355, Arg386–Glu433, and Arg668–Pro708. The interval Asp325–Lys697 is KLERQ. The segment covering Asn339 to Asn355 has biased composition (basic and acidic residues). Residues Asp350–Glu687 are a coiled coil. Over residues Arg668–Asn699 the composition is skewed to basic and acidic residues. Residues Val732–Glu793 enclose the SH3 1 domain. Residues Ala823 to Asn833 are compositionally biased toward low complexity. A disordered region spans residues Ala823–Ser851. Positions Trp834 to Thr846 are enriched in polar residues. The 59-residue stretch at Val897–Gly955 folds into the SH3 2 domain. The disordered stretch occupies residues Lys959–Ser978. Low complexity predominate over residues Ser960–Ser973. 3 consecutive SH3 domains span residues Ile986–Ser1044, Lys1058–Pro1122, and Pro1139–Asp1198. The short motif at Arg1088 to Trp1111 is the Bipartite nuclear localization signal; in isoform 2 element. The 187-residue stretch at Lys1221 to Gly1407 folds into the DH domain. Positions Lys1446–Glu1555 constitute a PH domain. A C2 domain is found at Lys1563–Val1679. Residues Asp1651, Ser1654, and Asp1657 each contribute to the Ca(2+) site.

Binds epn1 and epn2. The cofactor is Ca(2+).

The protein resides in the endomembrane system. Its subcellular location is the synapse. It localises to the synaptosome. It is found in the cell projection. The protein localises to the lamellipodium. The protein resides in the cell membrane. Its subcellular location is the membrane. It localises to the clathrin-coated pit. It is found in the recycling endosome. The protein localises to the cytoplasm. The protein resides in the nucleus envelope. Adapter protein that provides a link between the endocytic membrane traffic and the actin assembly machinery. Acts as a guanine nucleotide exchange factor (GEF) for cdc42, and thereby stimulates actin nucleation mediated by wasl and the arp2/3 complex. Involved in endocytosis of activated egfr, and probably also other growth factor receptors. The protein is Intersectin-1 (itsn1) of Xenopus laevis (African clawed frog).